Reading from the N-terminus, the 180-residue chain is Ferric nitrobindin-like protein (180 aa).

The GXWXGXG motif lies at 21–27 (GRWEGAG).

This sequence belongs to the nitrobindin family.

This chain is Ferric nitrobindin-like protein, found in Kineococcus radiotolerans (strain ATCC BAA-149 / DSM 14245 / SRS30216).